The chain runs to 160 residues: Cyclic pyranopterin monophosphate synthase (160 aa).

Substrate contacts are provided by residues 77–79 (MCH) and 114–115 (ME). Residue Asp-129 is part of the active site.

Belongs to the MoaC family. As to quaternary structure, homohexamer; trimer of dimers.

It catalyses the reaction (8S)-3',8-cyclo-7,8-dihydroguanosine 5'-triphosphate = cyclic pyranopterin phosphate + diphosphate. It functions in the pathway cofactor biosynthesis; molybdopterin biosynthesis. In terms of biological role, catalyzes the conversion of (8S)-3',8-cyclo-7,8-dihydroguanosine 5'-triphosphate to cyclic pyranopterin monophosphate (cPMP). This chain is Cyclic pyranopterin monophosphate synthase, found in Listeria monocytogenes serotype 4a (strain HCC23).